Reading from the N-terminus, the 85-residue chain is Large ribosomal subunit protein eL34 (85 aa).

It belongs to the eukaryotic ribosomal protein eL34 family.

This Saccharolobus islandicus (strain Y.N.15.51 / Yellowstone #2) (Sulfolobus islandicus) protein is Large ribosomal subunit protein eL34.